We begin with the raw amino-acid sequence, 2564 residues long: MKQLQPQPPPKMGDFYDPEHPTPEEEENEAKIENVQKTGFIKGPMFKGVASSRFLPKGTKTKVNLEEQGRQKVSFSFSLTKKTLQNRFLTALGNEKQSDTPNPPAVPLQVDSTPKMKMEIGDTLSTAEESSPPKSRVELGKIHFKKHLLHVTSRPLLATTTAVASPPTHAAPLPAVIAESTTVDSPPSSPPPPPPPAQATTLSSPAPVTEPVALPHTPITVLMAAPVPLPVDVAVRSLKEPPIIIVPESLEADTKQDTISNSLEEHVTQILNEQADISSKKEDSHIGKDEEIPDSSKISLSCKKTGSKKKSSQSEGIFLGSESDEDSVRTSSSQRSHDLKFSASIEKERDFKKSSAPLKSEDLGKPSRSKTDRDDKYFSYSKLERDTRYVSSRCRSERERRRSRSHSRSERGSRTNLSYSRSERSHYYDSDRRYHRSSPYRERTRYSRPYTDNRARESSDSEEEYKKTYSRRTSSHSSSYRDLRTSSYSKSDRDCKTETSYLEMERRGKYSSKLERESKRTSENEAIKRCCSPPNELGFRRGSSYSKHDSSASRYKSTLSKPIPKSDKFKNSFCCTELNEEIKQSHSFSLQTPCSKGSELRMINKNPEREKAGSPAPSNRLNDSPTLKKLDELPIFKSEFITHDSHDSIKELDSLSKVKNDQLRSFCPIELNINGSPGAESDLATFCTSKTDAVLMTSDDSVTGSELSPLVKACMLSSNGFQNISRCKEKDLDDTCMLHKKSESPFRETEPLVSPHQDKLMSMPVMTVDYSKTVVKEPVDTRVSCCKTKDSDIYCTLNDSNPSLCNSEAENIEPSVMKISSNSFMNVHLESKPVICDSRNLTDHSKFACEEYKQSIGSTSSASVNHFDDLYQPIGSSGIASSLQSLPPGIKVDSLTLLKCGENTSPVLDAVLKSKKSSEFLKHAGKETIVEVGSDLPDSGKGFASRENRRNNGLSGKCLQEAQEEGNSILPERRGRPEISLDERGEGGHVHTSDDSEVVFSSCDLNLTMEDSDGVTYALKCDSSGHAPEIVSTVHEDYSGSSESSNDESDSEDTDSDDSSIPRNRLQSVVVVPKNSTLPMEETSPCSSRSSQSYRHYSDHWEDERLESRRHLYEEKFESIASKACPQTDKFFLHKGTEKNPEISFTQSSRKQIDNRLPELSHPQSDGVDSTSHTDVKSDPLGHPNSEETVKAKIPSRQQEELPIYSSDFEDVPNKSWQQTTFQNRPDSRLGKTELSFSSSCEIPHVDGLHSSEELRNLGWDFSQEKPSTTYQQPDSSYGACGGHKYQQNAEQYGGTRDYWQGNGYWDPRSGRPPGTGVVYDRTQGQVPDSLTDDREEEENWDQQDGSHFSDQSDKFLLSLQKDKGSVQAPEISSNSIKDTLAVNEKKDFSKNLEKNDIKDRGPLKKRRQEIESDSESDGELQDRKKVRVEVEQGETSVPPGSALVGPSCVMDDFRDPQRWKECAKQGKMPCYFDLIEENVYLTERKKNKSHRDIKRMQCECTPLSKDERAQGEIACGEDCLNRLLMIECSSRCPNGDYCSNRRFQRKQHADVEVILTEKKGWGLRAAKDLPSNTFVLEYCGEVLDHKEFKARVKEYARNKNIHYYFMALKNDEIIDATQKGNCSRFMNHSCEPNCETQKWTVNGQLRVGFFTTKLVPSGSELTFDYQFQRYGKEAQKCFCGSANCRGYLGGENRVSIRAAGGKMKKERSRKKDSVDGELEALMENGEGLSDKNQVLSLSRLMVRIETLEQKLTCLELIQNTHSQSCLKSFLERHGLSLLWIWMAELGDGRESNQKLQEEIIKTLEHLPIPTKNMLEESKVLPIIQRWSQTKTAVPPLSEGDGYSSENTSRAHTPLNTPDPSTKLSTEADTDTPKKLMFRRLKIISENSMDSAISDATSELEGKDGKEDLDQLENVPVEEEEELQSQQLLPQQLPECKVDSETNIEASKLPTSEPEADAEIEPKESNGTKLEEPINEETPSQDEEEGVSDVESERSQEQPDKTVDISDLATKLLDSWKDLKEVYRIPKKSQTEKENTTTERGRDAVGFRDQTPAPKTPNRSRERDPDKQTQNKEKRKRRSSLSPPSSAYERGTKRPDDRYDTPTSKKKVRIKDRNKLSTEERRKLFEQEVAQREAQKQQQQMQNLGMTSPLPYDSLGYNAPHHPFAGYPPGYPMQAYVDPSNPNAGKVLLPTPSMDPVCSPAPYDHAQPLVGHSTEPLSAPPPVPVVPHVAAPVEVSSSQYVAQSDGVVHQDSSVAVLPVPAPGPVQGQNYSVWDSNQQSVSVQQQYSPAQSQATIYYQGQTCPTVYGVTSPYSQTTPPIVQSYAQPSLQYIQGQQIFTAHPQGVVVQPAAAVTTIVAPGQPQPLQPSEMVVTNNLLDLPPPSPPKPKTIVLPPNWKTARDPEGKIYYYHVITRQTQWDPPTWESPGDDASLEHEAEMDLGTPTYDENPMKASKKPKTAEADTSSELAKKSKEVFRKEMSQFIVQCLNPYRKPDCKVGRITTTEDFKHLARKLTHGVMNKELKYCKNPEDLECNENVKHKTKEYIKKYMQKFGAVYKPKEDTELE.

A compositionally biased stretch (pro residues) spans 1–11 (MKQLQPQPPPK). A disordered region spans residues 1–30 (MKQLQPQPPPKMGDFYDPEHPTPEEEENEA). The span at 17–30 (DPEHPTPEEEENEA) shows a compositional bias: basic and acidic residues. Phosphoserine is present on Ser-131. Disordered stretches follow at residues 180–211 (STTV…VTEP), 272–561 (NEQA…TLSK), and 607–626 (PERE…DSPT). The span at 187–197 (PSSPPPPPPPA) shows a compositional bias: pro residues. The segment covering 198-207 (QATTLSSPAP) has biased composition (low complexity). The span at 278–290 (SSKKEDSHIGKDE) shows a compositional bias: basic and acidic residues. 3 positions are modified to phosphoserine: Ser-321, Ser-323, and Ser-344. Composition is skewed to basic and acidic residues over residues 335–400 (RSHD…ERER), 421–432 (RSERSHYYDSDR), 439–467 (PYRE…EYKK), and 479–528 (SYRD…EAIK). Residue Lys-359 forms a Glycyl lysine isopeptide (Lys-Gly) (interchain with G-Cter in SUMO2) linkage. Phosphoserine is present on Ser-422. Residues Ser-532, Ser-614, and Ser-624 each carry the phosphoserine modification. The segment covering 616 to 625 (APSNRLNDSP) has biased composition (polar residues). Residue Thr-626 is modified to Phosphothreonine. A Glycyl lysine isopeptide (Lys-Gly) (interchain with G-Cter in SUMO2) cross-link involves residue Lys-637. Ser-698, Ser-708, Ser-744, and Ser-754 each carry phosphoserine. Lys-776 participates in a covalent cross-link: Glycyl lysine isopeptide (Lys-Gly) (interchain with G-Cter in SUMO2). Disordered stretches follow at residues 964 to 995 (EEGN…TSDD), 1036 to 1101 (EDYS…SDHW), 1133 to 1233 (LHKG…LGKT), 1264 to 1352 (QEKP…FSDQ), and 1393 to 1443 (LEKN…PGSA). Residues 971–994 (PERRGRPEISLDERGEGGHVHTSD) show a composition bias toward basic and acidic residues. The span at 1045–1058 (SNDESDSEDTDSDD) shows a compositional bias: acidic residues. Residues 1084–1095 (SPCSSRSSQSYR) show a composition bias toward low complexity. Ser-1098 bears the Phosphoserine mark. Over residues 1162-1171 (HPQSDGVDST) the composition is skewed to polar residues. Basic and acidic residues predominate over residues 1172–1191 (SHTDVKSDPLGHPNSEETVK). Residues 1215–1225 (KSWQQTTFQNR) show a composition bias toward polar residues. Ser-1228 carries the phosphoserine modification. A compositionally biased stretch (polar residues) spans 1265–1276 (EKPSTTYQQPDS). The segment covering 1393-1403 (LEKNDIKDRGP) has biased composition (basic and acidic residues). Residues Ser-1413, Ser-1415, and Ser-1417 each carry the phosphoserine modification. The interval 1418-1714 (DGELQDRKKV…KKERSRKKDS (297 aa)) is interaction with TUBA1A. The span at 1421-1431 (LQDRKKVRVEV) shows a compositional bias: basic and acidic residues. The 55-residue stretch at 1494-1548 (IKRMQCECTPLSKDERAQGEIACGEDCLNRLLMIECSSRCPNGDYCSNRRFQRKQ) folds into the AWS domain. Zn(2+)-binding residues include Cys-1499, Cys-1501, Cys-1516, Cys-1520, Cys-1529, Cys-1533, and Cys-1539. An SET domain is found at 1550-1667 (ADVEVILTEK…SGSELTFDYQ (118 aa)). S-adenosyl-L-methionine is bound by residues 1560–1562 (KGW), 1603–1605 (HYY), and 1628–1629 (NH). Cys-1631 is a Zn(2+) binding site. The Post-SET domain occupies 1674–1690 (EAQKCFCGSANCRGYLG). Position 1676 (Gln-1676) interacts with S-adenosyl-L-methionine. Cys-1678 serves as a coordination point for Zn(2+). Phe-1679 provides a ligand contact to S-adenosyl-L-methionine. Zn(2+)-binding residues include Cys-1680 and Cys-1685. Phosphoserine occurs at positions 1696, 1844, and 1845. The disordered stretch occupies residues 1831-1872 (KTAVPPLSEGDGYSSENTSRAHTPLNTPDPSTKLSTEADTDT). The span at 1844–1867 (SSENTSRAHTPLNTPDPSTKLSTE) shows a compositional bias: polar residues. Residues Thr-1853 and Thr-1872 each carry the phosphothreonine modification. Ser-1888 bears the Phosphoserine mark. Residues 1921 to 2142 (EELQSQQLLP…EAQKQQQQMQ (222 aa)) form a disordered region. The span at 1924–1935 (QSQQLLPQQLPE) shows a compositional bias: low complexity. Residue Ser-1952 is modified to Phosphoserine. Positions 1960–1972 (IEPKESNGTKLEE) are enriched in basic and acidic residues. Residues 1973 to 1990 (PINEETPSQDEEEGVSDV) show a composition bias toward acidic residues. A phosphoserine mark is found at Ser-1980, Ser-1988, and Ser-1995. Basic and acidic residues-rich tracts occupy residues 1991–2004 (ESER…KTVD), 2014–2046 (DSWK…DAVG), and 2059–2072 (RSRE…TQNK). Residues Ser-2080 and Ser-2082 each carry the phosphoserine modification. 2 stretches are compositionally biased toward basic and acidic residues: residues 2090–2100 (RGTKRPDDRYD) and 2111–2135 (KDRN…REAQ). Positions 2117–2146 (STEERRKLFEQEVAQREAQKQQQQMQNLGM) form a coiled coil. Positions 2137–2366 (QQQQMQNLGM…APGQPQPLQP (230 aa)) are low charge region. Residues 2389–2422 (IVLPPNWKTARDPEGKIYYYHVITRQTQWDPPTW) form the WW domain. Positions 2439–2465 (LGTPTYDENPMKASKKPKTAEADTSSE) are disordered. An interaction with POLR2A region spans residues 2457 to 2564 (TAEADTSSEL…YKPKEDTELE (108 aa)).

The protein belongs to the class V-like SAM-binding methyltransferase superfamily. Histone-lysine methyltransferase family. SET2 subfamily. In terms of assembly, specifically interacts with hyperphosphorylated C-terminal domain (CTD) of RNA polymerase II large subunit (POLR2A): binds to CTD heptad repeats doubly phosphorylated on 'Ser-2' and 'Ser-5' of each heptad. Interacts with HTT. Interacts with IWS1. Interacts with p53/TP53; leading to regulate p53/TP53 target genes. Component of a complex with HNRNPL. Interacts with TUBA1A; the interaction is independent on alpha-tubulin acetylation on 'Lys-40'. Interacts with STAT1. In terms of processing, may be automethylated. In terms of tissue distribution, ubiquitously expressed.

The protein resides in the nucleus. Its subcellular location is the chromosome. The catalysed reaction is L-lysyl(36)-[histone H3] + 3 S-adenosyl-L-methionine = N(6),N(6),N(6)-trimethyl-L-lysyl(36)-[histone H3] + 3 S-adenosyl-L-homocysteine + 3 H(+). It carries out the reaction L-lysyl-[protein] + S-adenosyl-L-methionine = N(6)-methyl-L-lysyl-[protein] + S-adenosyl-L-homocysteine + H(+). It catalyses the reaction L-lysyl-[protein] + 3 S-adenosyl-L-methionine = N(6),N(6),N(6)-trimethyl-L-lysyl-[protein] + 3 S-adenosyl-L-homocysteine + 3 H(+). With respect to regulation, specifically inhibited by sinefungin derivatives. N-propyl sinefungin (Pr-SNF) interacts preferentially with SETD2. Histone methyltransferase that specifically trimethylates 'Lys-36' of histone H3 (H3K36me3) using dimethylated 'Lys-36' (H3K36me2) as substrate. It is capable of trimethylating unmethylated H3K36 (H3K36me0) in vitro. Represents the main enzyme generating H3K36me3, a specific tag for epigenetic transcriptional activation. Plays a role in chromatin structure modulation during elongation by coordinating recruitment of the FACT complex and by interacting with hyperphosphorylated POLR2A. Acts as a key regulator of DNA mismatch repair in G1 and early S phase by generating H3K36me3, a mark required to recruit MSH6 subunit of the MutS alpha complex: early recruitment of the MutS alpha complex to chromatin to be replicated allows a quick identification of mismatch DNA to initiate the mismatch repair reaction. Required for DNA double-strand break repair in response to DNA damage: acts by mediating formation of H3K36me3, promoting recruitment of RAD51 and DNA repair via homologous recombination (HR). Acts as a tumor suppressor. H3K36me3 also plays an essential role in the maintenance of a heterochromatic state, by recruiting DNA methyltransferase DNMT3A. H3K36me3 is also enhanced in intron-containing genes, suggesting that SETD2 recruitment is enhanced by splicing and that splicing is coupled to recruitment of elongating RNA polymerase. Required during angiogenesis. Required for endoderm development by promoting embryonic stem cell differentiation toward endoderm: acts by mediating formation of H3K36me3 in distal promoter regions of FGFR3, leading to regulate transcription initiation of FGFR3. In addition to histones, also mediates methylation of other proteins, such as tubulins and STAT1. Trimethylates 'Lys-40' of alpha-tubulins such as TUBA1B (alpha-TubK40me3); alpha-TubK40me3 is required for normal mitosis and cytokinesis and may be a specific tag in cytoskeletal remodeling. Involved in interferon-alpha-induced antiviral defense by mediating both monomethylation of STAT1 at 'Lys-525' and catalyzing H3K36me3 on promoters of some interferon-stimulated genes (ISGs) to activate gene transcription. In terms of biological role, (Microbial infection) Recruited to the promoters of adenovirus 12 E1A gene in case of infection, possibly leading to regulate its expression. The polypeptide is Histone-lysine N-methyltransferase SETD2 (SETD2) (Homo sapiens (Human)).